Reading from the N-terminus, the 128-residue chain is Protein Wnt-10 (128 aa).

5 disulfide bridges follow: cysteine 3–cysteine 17, cysteine 5–cysteine 12, cysteine 74–cysteine 105, cysteine 90–cysteine 100, and cysteine 127–cysteine 128. Residue serine 9 is the site of O-palmitoleoyl serine; by PORCN attachment. Asparagine 91 is a glycosylation site (N-linked (GlcNAc...) asparagine).

Belongs to the Wnt family. Palmitoleoylation is required for efficient binding to frizzled receptors. Depalmitoleoylation leads to Wnt signaling pathway inhibition. As to expression, in embryo, in dorsal hindbrain; in adults, in brain.

The protein resides in the secreted. Its subcellular location is the extracellular space. It localises to the extracellular matrix. In terms of biological role, ligand for members of the frizzled family of seven transmembrane receptors. Probable developmental protein. May be a signaling molecule which affects the development of discrete regions of tissues. Is likely to signal over only few cell diameters. This is Protein Wnt-10 (wnt10) from Xenopus laevis (African clawed frog).